The following is a 153-amino-acid chain: Virion assembly protein OPG100 (153 aa).

Belongs to the orthopoxvirus OPG100 family. Homodimer. Part of a complex composed of the kinase OPG054, OPG092, OPG114, OPG115, OPG142 and OPG157. Interacts with OPG175.

The protein resides in the virion. Its subcellular location is the host cytoplasm. Functionally, late protein which is a part of a large complex required for early virion morphogenesis. This complex participates in the formation of virosomes and the incorporation of virosomal contents into nascent immature virions. Plays a role in DNA packaging during immature virions (IV) formation. In Vaccinia virus (strain Western Reserve) (VACV), this protein is Virion assembly protein OPG100 (OPG100).